A 223-amino-acid polypeptide reads, in one-letter code: Phosphoribosylformylglycinamidine synthase subunit PurQ (223 aa).

One can recognise a Glutamine amidotransferase type-1 domain in the interval 3 to 223; sequence SAVVQLPGLN…FASALDVIAA (221 aa). The active-site Nucleophile is C86. Active-site residues include H196 and E198.

Part of the FGAM synthase complex composed of 1 PurL, 1 PurQ and 2 PurS subunits.

The protein resides in the cytoplasm. The catalysed reaction is N(2)-formyl-N(1)-(5-phospho-beta-D-ribosyl)glycinamide + L-glutamine + ATP + H2O = 2-formamido-N(1)-(5-O-phospho-beta-D-ribosyl)acetamidine + L-glutamate + ADP + phosphate + H(+). It carries out the reaction L-glutamine + H2O = L-glutamate + NH4(+). The protein operates within purine metabolism; IMP biosynthesis via de novo pathway; 5-amino-1-(5-phospho-D-ribosyl)imidazole from N(2)-formyl-N(1)-(5-phospho-D-ribosyl)glycinamide: step 1/2. Functionally, part of the phosphoribosylformylglycinamidine synthase complex involved in the purines biosynthetic pathway. Catalyzes the ATP-dependent conversion of formylglycinamide ribonucleotide (FGAR) and glutamine to yield formylglycinamidine ribonucleotide (FGAM) and glutamate. The FGAM synthase complex is composed of three subunits. PurQ produces an ammonia molecule by converting glutamine to glutamate. PurL transfers the ammonia molecule to FGAR to form FGAM in an ATP-dependent manner. PurS interacts with PurQ and PurL and is thought to assist in the transfer of the ammonia molecule from PurQ to PurL. In Rhizobium johnstonii (strain DSM 114642 / LMG 32736 / 3841) (Rhizobium leguminosarum bv. viciae), this protein is Phosphoribosylformylglycinamidine synthase subunit PurQ.